The chain runs to 286 residues: uncharacterized protein (286 aa).

2 disordered regions span residues 59–89 and 225–286; these read PESAPGKPGCAEAESAGTAAATESHGAPGAK and RQRK…EDTR. Residues 69 to 85 show a composition bias toward low complexity; that stretch reads AEAESAGTAAATESHGA.

This is an uncharacterized protein from Mus musculus (Mouse).